We begin with the raw amino-acid sequence, 380 residues long: GATOR1 complex protein NPRL2 (380 aa).

Residues 1 to 133 form an interaction with PDPK1 region; the sequence is MGSSCRIECI…SKQKLVPIMT (133 aa). Arginine 78 lines the GDP pocket. At arginine 78 the chain carries Asymmetric dimethylarginine. Glycyl lysine isopeptide (Lys-Gly) (interchain with G-Cter in ubiquitin) cross-links involve residues lysine 158 and lysine 357.

This sequence belongs to the NPR2 family. In terms of assembly, within the GATOR complex, component of the GATOR1 subcomplex, made of DEPDC5, NPRL2 and NPRL3. GATOR1 mediates the strong interaction of the GATOR complex with small GTPases Rag (RagA/RRAGA, RagB/RRAGB, RagC/RRAGC and/or RagD/RRAGD) heterodimers. GATOR1 interacts with GPR155/LYCHOS; interaction takes place in presence of cholesterol and prevents interaction between GATOR1 and KICSTOR. Interacts with PDPK1. In terms of processing, in the presence of abundant amino acids, ubiquitinated at Lys-158 and Lys-357 via 'Lys-6'-linked ubiquitination by the WDR24 component of the GATOR2 complex, thereby inhibiting the GATOR1 complex and promoting mTORC1 activation. Post-translationally, asymmetric dimethylation at Arg-78 by PRMT1 inhibits the GTPase activator activity of the GATOR1 complex and consequently inducing timely mTORC1 activation under methionine-sufficient conditions.

The protein resides in the lysosome membrane. Functionally, catalytic component of the GATOR1 complex, a multiprotein complex that functions as an inhibitor of the amino acid-sensing branch of the mTORC1 pathway. In response to amino acid depletion, the GATOR1 complex has GTPase activating protein (GAP) activity and strongly increases GTP hydrolysis by RagA/RRAGA (or RagB/RRAGB) within heterodimeric Rag complexes, thereby turning them into their inactive GDP-bound form, releasing mTORC1 from lysosomal surface and inhibiting mTORC1 signaling. In the presence of abundant amino acids, the GATOR1 complex is ubiquitinated and inhibited by GATOR2. Within the GATOR1 complex, NPRL2 constitutes the catalytic subunit that mediates the GTPase activator activity and under methionine-sufficient conditions, the GTPase activator activity is inhibited by PRMT1 through methylation and consequently inducing timely mTORC1 activation. In terms of biological role, suppresses Src-dependent tyrosine phosphorylation and activation of PDPK1 and its downstream signaling. Down-regulates PDPK1 kinase activity by interfering with tyrosine phosphorylation at 'Tyr-9', 'Tyr-373' and 'Tyr-376' residues. May act as a tumor suppressor. Suppresses cell growth and enhances sensitivity to various anticancer drugs. This chain is GATOR1 complex protein NPRL2, found in Mus musculus (Mouse).